A 402-amino-acid chain; its full sequence is 1-deoxy-D-xylulose 5-phosphate reductoisomerase (402 aa).

Positions 13, 14, 15, 16, and 126 each coordinate NADPH. K127 lines the 1-deoxy-D-xylulose 5-phosphate pocket. Residue E128 participates in NADPH binding. D152 is a Mn(2+) binding site. Residues S153, E154, S188, and H211 each contribute to the 1-deoxy-D-xylulose 5-phosphate site. A Mn(2+)-binding site is contributed by E154. G217 provides a ligand contact to NADPH. The 1-deoxy-D-xylulose 5-phosphate site is built by S224, N229, K230, and E233. E233 is a binding site for Mn(2+).

It belongs to the DXR family. Requires Mg(2+) as cofactor. Mn(2+) is required as a cofactor.

It carries out the reaction 2-C-methyl-D-erythritol 4-phosphate + NADP(+) = 1-deoxy-D-xylulose 5-phosphate + NADPH + H(+). The protein operates within isoprenoid biosynthesis; isopentenyl diphosphate biosynthesis via DXP pathway; isopentenyl diphosphate from 1-deoxy-D-xylulose 5-phosphate: step 1/6. In terms of biological role, catalyzes the NADPH-dependent rearrangement and reduction of 1-deoxy-D-xylulose-5-phosphate (DXP) to 2-C-methyl-D-erythritol 4-phosphate (MEP). In Psychrobacter cryohalolentis (strain ATCC BAA-1226 / DSM 17306 / VKM B-2378 / K5), this protein is 1-deoxy-D-xylulose 5-phosphate reductoisomerase.